Consider the following 3393-residue polypeptide: Genome polyprotein (3393 aa).

At 1–91 the chain is on the cytoplasmic side; sequence MVNPKGVNVM…GVSRRKKRRS (91 aa). The interval 28–60 is hydrophobic; homodimerization of capsid protein C; it reads VSRGLRGFVLFVLTQLFMGRKLTPNVRRLWKSS. The propeptide at 91-108 is ER anchor for the capsid protein C, removed in mature form by serine protease NS3; that stretch reads SATTSGTVFMAMLGLTLA. A helical transmembrane segment spans residues 92–112; sequence ATTSGTVFMAMLGLTLAASVA. Residues 113–231 lie on the Extracellular side of the membrane; that stretch reads RHAHHTLINI…FETQVQKVEK (119 aa). Asparagine 121 and asparagine 137 each carry an N-linked (GlcNAc...) asparagine; by host glycan. The helical transmembrane segment at 232 to 252 threads the bilayer; the sequence is WIIRNPTYAIAAILMSWYIGN. The Cytoplasmic portion of the chain corresponds to 253-257; the sequence is SLKQR. The chain crosses the membrane as a helical span at residues 258 to 272; the sequence is VVLLLLTLALGPAYA. The Extracellular segment spans residues 273–713; that stretch reads THCVGIPKRD…IHTVFGTAFH (441 aa). 5 cysteine pairs are disulfide-bonded: cysteine 275/cysteine 302, cysteine 346/cysteine 377, cysteine 364/cysteine 388, cysteine 453/cysteine 553, and cysteine 570/cysteine 600. Positions 370–383 are fusion peptide; it reads DRGWGNGCGLFGKG. Residues 714–734 traverse the membrane as a helical segment; that stretch reads GIFGGLSWMTRILIGVLLVWL. At 735–745 the chain is on the cytoplasmic side; the sequence is GLNSRNGTATT. Residues 746–763 traverse the membrane as a helical segment; it reads LMMLTGFIILFLSLGVGA. The Extracellular portion of the chain corresponds to 764 to 1112; it reads EVGCSVNWGQ…TPEKHLVRSW (349 aa). Disulfide bonds link cysteine 767–cysteine 778, cysteine 818–cysteine 905, cysteine 941–cysteine 986, cysteine 1043–cysteine 1092, cysteine 1054–cysteine 1075, cysteine 1054–cysteine 1076, cysteine 1075–cysteine 1079, and cysteine 1076–cysteine 1079. Residues asparagine 893 and asparagine 970 are each glycosylated (N-linked (GlcNAc...) asparagine; by host). A helical membrane pass occupies residues 1113–1133; sequence VTAGDSYPAWSIGLVAMFLFV. Over 1134 to 1186 the chain is Cytoplasmic; the sequence is DIMARSRPTRKMMIGGTMLLLAIMIMGELSYLDLLRYIIVVGEHFIERENGGD. Residues 1187 to 1207 traverse the membrane as a helical segment; the sequence is VAYMAIMAASHLRPGLMAMVF. Residues 1208–1283 lie on the Lumenal side of the membrane; the sequence is AKSMWSPKQR…PVSMPVIRKA (76 aa). Residues 1284–1304 traverse the membrane as a helical segment; that stretch reads SMIIGTGGLLLSLWKGGGSSM. The Cytoplasmic segment spans residues 1305 to 1341; sequence RKGLPLFAASAARVLGLTKAHLSVLFILLITKNGKRT. Residues 1342 to 1362 form a helical membrane-spanning segment; it reads WPISECLAAVGIFGAAFGTMF. Residues 1363-1365 are Lumenal-facing; sequence SED. A helical transmembrane segment spans residues 1366–1386; the sequence is ETLLGPLALVGVVLIVYTMFT. Topologically, residues 1387–1438 are cytoplasmic; that stretch reads QSDGLELVKAADISWSDEAVVSGEARRFDVALNDSGEFKLLDEPPVSWLNVS. Residues 1393–1432 form an interacts with and activates NS3 protease region; that stretch reads LVKAADISWSDEAVVSGEARRFDVALNDSGEFKLLDEPPV. Positions 1439–1459 form an intramembrane region, helical; sequence FLVVAIVASSLHPIALVVTLV. The Cytoplasmic segment spans residues 1460 to 2137; sequence AWTYWRTEKR…KLALQQAPEA (678 aa). The Peptidase S7 domain occupies 1470–1649; that stretch reads SGVLWDVPLA…QPGSVAEVET (180 aa). Active-site charge relay system; for serine protease NS3 activity residues include histidine 1521, aspartate 1545, and serine 1606. The region spanning 1653–1809 is the Helicase ATP-binding domain; sequence DKMLRKGEFT…ESNAEIEDVK (157 aa). Residues 1657–1660 are important for RNA-binding; the sequence is RKGE. Residue 1666–1673 coordinates ATP; it reads YHPGAGKT. A DEAH box motif is present at residues 1757-1760; it reads DEAH. The Helicase C-terminal domain maps to 1804–1984; the sequence is EIEDVKKEIP…VAPLYEEEAS (181 aa). A helical transmembrane segment spans residues 2138–2158; it reads VSTLLLLGMMAICTLGLVILL. Topologically, residues 2159–2168 are lumenal; sequence MKPKATDKMS. An intramembrane region (helical) is located at residues 2169-2184; sequence MAMVTMAITGYLLKLG. A topological domain (lumenal) is located at residue glycine 2185. Residues 2186-2206 form a helical membrane-spanning segment; it reads MTHAQVGGILLVFFIMMVVII. Residues 2207–2221 are Cytoplasmic-facing; it reads PESGTQRSINDNKLA. The chain crosses the membrane as a helical span at residues 2222-2236; that stretch reads YVIILVGLVIGGVAC. The Lumenal segment spans residues 2237–2275; that stretch reads NELGWLEKTKADLFGNNMTHAQTVVLPTINWNWLDFRPG. The helical intramembrane region spans 2276–2296; that stretch reads AAWSLYVGMATFLTPVFVHWI. Residues 2297–2344 lie on the Lumenal side of the membrane; sequence KNEYGNASLTGITPTAGILGALNQGVPFVKLNTSVGVLLLSVWNNFTT. Residues 2345–2365 traverse the membrane as a helical segment; it reads SSMLAAMVMLACHCLFVLPGV. Residues 2366 to 2408 lie on the Cytoplasmic side of the membrane; it reads RAQCLREAQIRVFHGVAKNPMVDGNPTVDLEKENDMPDLYEKK. A helical transmembrane segment spans residues 2409 to 2429; it reads LALVALGMAAVLNAAMVRTAL. Residues 2430–2457 are Lumenal-facing; it reads TTAEMVVLGSAAVGPLLEGNTSAFWNGP. Residues 2458–2478 form a helical membrane-spanning segment; it reads LAVAVAGVMRGNHYALIGIVY. Residues 2479-3393 lie on the Cytoplasmic side of the membrane; that stretch reads NLWLLKTARR…QRCSAYGELL (915 aa). One can recognise an mRNA cap 0-1 NS5-type MT domain in the interval 2489-2753; the sequence is GGSSALTYGE…DLIYPTGTRS (265 aa). Serine 2544 is an S-adenosyl-L-methionine binding site. Serine 2544 bears the Phosphoserine mark. Lysine 2549 (for 2'-O-MTase activity) is an active-site residue. Glycine 2574, tryptophan 2575, threonine 2592, leucine 2593, aspartate 2619, and isoleucine 2620 together coordinate S-adenosyl-L-methionine. Residue aspartate 2634 is the For 2'-O-MTase activity of the active site. Isoleucine 2635 lines the S-adenosyl-L-methionine pocket. Residues lysine 2670 and glutamate 2706 each act as for 2'-O-MTase activity in the active site. Tyrosine 2708 provides a ligand contact to S-adenosyl-L-methionine. The Nuclear localization signal signature appears at 2860 to 2893; it reads REIMKVVNQWLFDYLGRTKQPRICTKEEFINKVR. Residues glutamate 2927, histidine 2931, cysteine 2936, and cysteine 2939 each coordinate Zn(2+). Residues 3017-3169 form the RdRp catalytic domain; it reads GLVYADDTAG…APVDESFAGA (153 aa). Residues histidine 3204, cysteine 3220, and cysteine 3339 each contribute to the Zn(2+) site.

This sequence in the N-terminal section; belongs to the class I-like SAM-binding methyltransferase superfamily. mRNA cap 0-1 NS5-type methyltransferase family. Homodimer. Interacts (via N-terminus) with host EXOC1 (via C-terminus); this interaction results in EXOC1 degradation through the proteasome degradation pathway. As to quaternary structure, forms heterodimers with envelope protein E in the endoplasmic reticulum and Golgi. In terms of assembly, homodimer; in the endoplasmic reticulum and Golgi. Interacts with protein prM. Interacts with non-structural protein 1. Homodimer; Homohexamer when secreted. Interacts with envelope protein E. As to quaternary structure, interacts (via N-terminus) with serine protease NS3. In terms of assembly, forms a heterodimer with serine protease NS3. May form homooligomers. Forms a heterodimer with NS2B. Interacts with non-structural protein 2A (via N-terminus). Interacts with NS4B. Interacts with unphosphorylated RNA-directed RNA polymerase NS5; this interaction stimulates RNA-directed RNA polymerase NS5 guanylyltransferase activity. NS3 interacts with host PDCD6IP; this interaction contributes to virion release. As to quaternary structure, interacts with serine protease NS3. In terms of assembly, homodimer. Interacts with host STAT2; this interaction prevents the establishment of cellular antiviral state. Interacts with host TRIM23; this interaction leads to NS5 ubiquitination. Specific enzymatic cleavages in vivo yield mature proteins. The nascent capsid protein C contains a C-terminal hydrophobic domain that act as a signal sequence for translocation of prM into the lumen of the ER. Mature capsid protein C is cleaved at a site upstream of this hydrophobic domain by NS3. prM is cleaved in post-Golgi vesicles by a host furin, releasing the mature small envelope protein M, and peptide pr. Non-structural protein 2A-alpha, a C-terminally truncated form of non-structural protein 2A, results from partial cleavage by NS3. Specific enzymatic cleavages in vivo yield mature proteins peptide 2K acts as a signal sequence and is removed from the N-terminus of NS4B by the host signal peptidase in the ER lumen. Signal cleavage at the 2K-4B site requires a prior NS3 protease-mediated cleavage at the 4A-2K site. In terms of processing, cleaved in post-Golgi vesicles by a host furin, releasing the mature small envelope protein M, and peptide pr. This cleavage is incomplete as up to 30% of viral particles still carry uncleaved prM. Post-translationally, N-glycosylated. N-glycosylated. The excreted form is glycosylated and this is required for efficient secretion of the protein from infected cells. In terms of processing, polyubiquitinated; ubiquitination is probably mediated by host TRIM23 and is prerequisite for NS5-STAT2 interaction. NS5 is not ISGylated or sumoylated. Post-translationally, phosphorylated on serines residues. This phosphorylation may trigger NS5 nuclear localization.

Its subcellular location is the virion. The protein localises to the host nucleus. It is found in the host cytoplasm. The protein resides in the host perinuclear region. It localises to the secreted. Its subcellular location is the virion membrane. The protein localises to the host endoplasmic reticulum membrane. It catalyses the reaction Selective hydrolysis of -Xaa-Xaa-|-Yaa- bonds in which each of the Xaa can be either Arg or Lys and Yaa can be either Ser or Ala.. The enzyme catalyses RNA(n) + a ribonucleoside 5'-triphosphate = RNA(n+1) + diphosphate. It carries out the reaction a ribonucleoside 5'-triphosphate + H2O = a ribonucleoside 5'-diphosphate + phosphate + H(+). The catalysed reaction is ATP + H2O = ADP + phosphate + H(+). It catalyses the reaction a 5'-end (5'-triphosphoguanosine)-ribonucleoside in mRNA + S-adenosyl-L-methionine = a 5'-end (N(7)-methyl 5'-triphosphoguanosine)-ribonucleoside in mRNA + S-adenosyl-L-homocysteine. The enzyme catalyses a 5'-end (N(7)-methyl 5'-triphosphoguanosine)-ribonucleoside in mRNA + S-adenosyl-L-methionine = a 5'-end (N(7)-methyl 5'-triphosphoguanosine)-(2'-O-methyl-ribonucleoside) in mRNA + S-adenosyl-L-homocysteine + H(+). Functionally, plays a role in virus budding by binding to the cell membrane and gathering the viral RNA into a nucleocapsid that forms the core of a mature virus particle. During virus entry, may induce genome penetration into the host cytoplasm after hemifusion induced by the surface proteins. Can migrate to the cell nucleus where it modulates host functions. In terms of biological role, inhibits RNA silencing by interfering with host Dicer. Its function is as follows. Prevents premature fusion activity of envelope proteins in trans-Golgi by binding to envelope protein E at pH6.0. After virion release in extracellular space, gets dissociated from E dimers. Acts as a chaperone for envelope protein E during intracellular virion assembly by masking and inactivating envelope protein E fusion peptide. prM is the only viral peptide matured by host furin in the trans-Golgi network probably to avoid catastrophic activation of the viral fusion activity in acidic Golgi compartment prior to virion release. prM-E cleavage is inefficient, and many virions are only partially matured. These uncleaved prM would play a role in immune evasion. Functionally, may play a role in virus budding. Exerts cytotoxic effects by activating a mitochondrial apoptotic pathway through M ectodomain. May display a viroporin activity. In terms of biological role, binds to host cell surface receptor and mediates fusion between viral and cellular membranes. Envelope protein is synthesized in the endoplasmic reticulum in the form of heterodimer with protein prM. They play a role in virion budding in the ER, and the newly formed immature particle is covered with 60 spikes composed of heterodimer between precursor prM and envelope protein E. The virion is transported to the Golgi apparatus where the low pH causes dissociation of PrM-E heterodimers and formation of E homodimers. prM-E cleavage is inefficient, and many virions are only partially matured. These uncleaved prM would play a role in immune evasion. Its function is as follows. Involved in immune evasion, pathogenesis and viral replication. Once cleaved off the polyprotein, is targeted to three destinations: the viral replication cycle, the plasma membrane and the extracellular compartment. Essential for viral replication. Required for formation of the replication complex and recruitment of other non-structural proteins to the ER-derived membrane structures. Excreted as a hexameric lipoparticle that plays a role against host immune response. Antagonizing the complement function. Binds to the host macrophages and dendritic cells. Inhibits signal transduction originating from Toll-like receptor 3 (TLR3). Component of the viral RNA replication complex that functions in virion assembly and antagonizes the host immune response. Functionally, required cofactor for the serine protease function of NS3. May have membrane-destabilizing activity and form viroporins. In terms of biological role, displays three enzymatic activities: serine protease, NTPase and RNA helicase. NS3 serine protease, in association with NS2B, performs its autocleavage and cleaves the polyprotein at dibasic sites in the cytoplasm: C-prM, NS2A-NS2B, NS2B-NS3, NS3-NS4A, NS4A-2K and NS4B-NS5. NS3 RNA helicase binds RNA and unwinds dsRNA in the 3' to 5' direction. Also plays a role in virus assembly. Its function is as follows. Regulates the ATPase activity of the NS3 helicase activity. NS4A allows NS3 helicase to conserve energy during unwinding. Functions as a signal peptide for NS4B and is required for the interferon antagonism activity of the latter. Functionally, induces the formation of ER-derived membrane vesicles where the viral replication takes place. Inhibits interferon (IFN)-induced host STAT1 phosphorylation and nuclear translocation, thereby preventing the establishment of cellular antiviral state by blocking the IFN-alpha/beta pathway. In terms of biological role, replicates the viral (+) and (-) RNA genome, and performs the capping of genomes in the cytoplasm. NS5 methylates viral RNA cap at guanine N-7 and ribose 2'-O positions. Besides its role in RNA genome replication, also prevents the establishment of cellular antiviral state by blocking the interferon-alpha/beta (IFN-alpha/beta) signaling pathway. IFN-I induces binding of NS5 to host IFN-activated transcription factor STAT2, preventing its transcriptional activity. Host TRIM23 is the E3 ligase that interacts with and polyubiquitinates NS5 to promote its binding to STAT2 and trigger IFN-I signaling inhibition. The sequence is that of Genome polyprotein from Banzi virus (BANV).